A 367-amino-acid chain; its full sequence is Adenine deaminase (367 aa).

Residues His19, His21, and His209 each coordinate Zn(2+). Glu212 serves as the catalytic Proton donor. Asp290 serves as a coordination point for Zn(2+). Position 291 (Asp291) interacts with substrate.

It belongs to the metallo-dependent hydrolases superfamily. Adenosine and AMP deaminases family. Adenine deaminase type 2 subfamily. Requires Zn(2+) as cofactor.

It is found in the cytoplasm. The protein localises to the nucleus. The enzyme catalyses adenine + H2O + H(+) = hypoxanthine + NH4(+). In terms of biological role, catalyzes the hydrolytic deamination of adenine to hypoxanthine. Plays an important role in the purine salvage pathway and in nitrogen catabolism. Also exhibits a low activity towards N(6)-substituted adenines that are commonly known as the plant hormones cytokinins. This is Adenine deaminase from Schizosaccharomyces pombe (strain 972 / ATCC 24843) (Fission yeast).